Reading from the N-terminus, the 199-residue chain is Recombination protein RecR (199 aa).

A C4-type zinc finger spans residues Cys58–Cys73. Residues Gly81 to Pro176 form the Toprim domain.

This sequence belongs to the RecR family.

Its function is as follows. May play a role in DNA repair. It seems to be involved in an RecBC-independent recombinational process of DNA repair. It may act with RecF and RecO. The chain is Recombination protein RecR from Dinoroseobacter shibae (strain DSM 16493 / NCIMB 14021 / DFL 12).